The following is a 387-amino-acid chain: S-adenosylmethionine synthase (387 aa).

Position 17 (H17) interacts with ATP. D19 contacts Mg(2+). E45 serves as a coordination point for K(+). L-methionine contacts are provided by E58 and Q101. The tract at residues 101-111 is flexible loop; the sequence is QSPDIAQGVDR. ATP-binding positions include 168–170, 234–235, D243, 249–250, A266, and K270; these read DAK, RF, and RK. An L-methionine-binding site is contributed by D243. Residue K274 participates in L-methionine binding.

The protein belongs to the AdoMet synthase family. In terms of assembly, homotetramer; dimer of dimers. It depends on Mg(2+) as a cofactor. Requires K(+) as cofactor.

The protein localises to the cytoplasm. The enzyme catalyses L-methionine + ATP + H2O = S-adenosyl-L-methionine + phosphate + diphosphate. The protein operates within amino-acid biosynthesis; S-adenosyl-L-methionine biosynthesis; S-adenosyl-L-methionine from L-methionine: step 1/1. Functionally, catalyzes the formation of S-adenosylmethionine (AdoMet) from methionine and ATP. The overall synthetic reaction is composed of two sequential steps, AdoMet formation and the subsequent tripolyphosphate hydrolysis which occurs prior to release of AdoMet from the enzyme. The polypeptide is S-adenosylmethionine synthase (Bordetella bronchiseptica (strain ATCC BAA-588 / NCTC 13252 / RB50) (Alcaligenes bronchisepticus)).